Here is a 309-residue protein sequence, read N- to C-terminus: Olfactory receptor 5AK2 (309 aa).

The Extracellular segment spans residues 1–25; it reads MTLGNSTEVTEFYLLGFGAQHEFWC. An N-linked (GlcNAc...) asparagine glycan is attached at Asn-5. The chain crosses the membrane as a helical span at residues 26-46; that stretch reads ILFIVFLLIYVTSIMGNSGII. At 47–54 the chain is on the cytoplasmic side; that stretch reads LLINTDSR. The chain crosses the membrane as a helical span at residues 55-75; that stretch reads FQTLTYFFLQHLAFVDICYTS. The Extracellular portion of the chain corresponds to 76–99; sequence AITPKMLQSFTEEKNLMLFQGCVI. Cys-97 and Cys-189 are disulfide-bonded. A helical transmembrane segment spans residues 100–120; that stretch reads QFLVYATFATSDCYLLAMMAV. Residues 121 to 133 lie on the Cytoplasmic side of the membrane; the sequence is DPYVAICKPLHYT. The chain crosses the membrane as a helical span at residues 134–154; sequence VIMSRTVCIRLVAGSYIMGSI. Asn-155 carries N-linked (GlcNAc...) asparagine glycosylation. At 155–196 the chain is on the extracellular side; it reads NASVQTGFTCSLSFCKSNSINHFFCDVPPILALSCSNVDINI. Residues 197–217 traverse the membrane as a helical segment; the sequence is MLLVVFVGSNLIFTGLVVIFS. The Cytoplasmic portion of the chain corresponds to 218–237; that stretch reads YIYIMATILKMSSSAGRKKS. The chain crosses the membrane as a helical span at residues 238–258; it reads FSTCASHLTAVTIFYGTLSYM. At 259 to 271 the chain is on the extracellular side; the sequence is YLQSHSNNSQENM. Asn-265 carries N-linked (GlcNAc...) asparagine glycosylation. The helical transmembrane segment at 272–292 threads the bilayer; that stretch reads KVAFIFYGTVIPMLNPLIYSL. The Cytoplasmic segment spans residues 293-309; it reads RNKEVKEALKVIGKKLF.

Belongs to the G-protein coupled receptor 1 family.

The protein resides in the cell membrane. Odorant receptor. In Homo sapiens (Human), this protein is Olfactory receptor 5AK2 (OR5AK2).